The chain runs to 160 residues: Fimbrial protein (160 aa).

The propeptide at 1–7 (MKSLQKG) is leader sequence. At Phe-8 the chain carries N-methylphenylalanine. Residues 8–28 (FTLIELMIVVAIIGILAAFAI) form a helical membrane-spanning segment.

Belongs to the N-Me-Phe pilin family. The pili are polar flexible filaments of about 5.4 nanometers diameter and 2.5 micrometers average length; they consist of only a single polypeptide chain arranged in a helical configuration of five subunits per turn in the assembled pilus.

It localises to the fimbrium. The protein resides in the membrane. This is Fimbrial protein (fimA) from Dichelobacter nodosus (Bacteroides nodosus).